The chain runs to 218 residues: Peptide methionine sulfoxide reductase MsrA (218 aa).

Cysteine 57 is an active-site residue.

It belongs to the MsrA Met sulfoxide reductase family.

The catalysed reaction is L-methionyl-[protein] + [thioredoxin]-disulfide + H2O = L-methionyl-(S)-S-oxide-[protein] + [thioredoxin]-dithiol. The enzyme catalyses [thioredoxin]-disulfide + L-methionine + H2O = L-methionine (S)-S-oxide + [thioredoxin]-dithiol. Has an important function as a repair enzyme for proteins that have been inactivated by oxidation. Catalyzes the reversible oxidation-reduction of methionine sulfoxide in proteins to methionine. This chain is Peptide methionine sulfoxide reductase MsrA, found in Brucella suis biovar 1 (strain 1330).